The primary structure comprises 419 residues: Phosphatidylinositol 5-phosphate 4-kinase type-2 gamma (419 aa).

Residues 46–418 (ASDPLISVFM…RFLEFVTNIF (373 aa)) form the PIPK domain. Residues 299-310 (QEEEEDLEEDHT) are compositionally biased toward acidic residues. The segment at 299 to 320 (QEEEEDLEEDHTENESSPHMNV) is disordered.

In terms of processing, phosphorylated, phosphorylation is induced by EGF.

The protein resides in the endoplasmic reticulum. The protein localises to the cytoplasm. It carries out the reaction a 1,2-diacyl-sn-glycero-3-phospho-(1D-myo-inositol-5-phosphate) + ATP = a 1,2-diacyl-sn-glycero-3-phospho-(1D-myo-inositol-4,5-bisphosphate) + ADP + H(+). The enzyme catalyses 1,2-dihexadecanoyl-sn-glycero-3-phospho-(1D-myo-inositol-5-phosphate) + ATP = 1,2-dihexadecanoyl-sn-glycero-3-phospho-(1D-myo-inositol-4,5-bisphosphate) + ADP + H(+). The catalysed reaction is 1,2-dihexadecanoyl-sn-glycero-3-phospho-(1D-myo-inositol-5-phosphate) + GTP = 1,2-dihexadecanoyl-sn-glycero-3-phospho-(1D-myo-inositol-4,5-bisphosphate) + GDP + H(+). Functionally, phosphatidylinositol 5-phosphate 4-kinase with low enzymatic activity. May be a GTP sensor, has higher GTP-dependent kinase activity than ATP-dependent kinase activity. The chain is Phosphatidylinositol 5-phosphate 4-kinase type-2 gamma (pip4k2c) from Xenopus tropicalis (Western clawed frog).